Reading from the N-terminus, the 268-residue chain is Ribosomal RNA small subunit methyltransferase A (268 aa).

6 residues coordinate S-adenosyl-L-methionine: Asn-16, Leu-18, Gly-43, Glu-64, Asp-89, and Asn-110.

The protein belongs to the class I-like SAM-binding methyltransferase superfamily. rRNA adenine N(6)-methyltransferase family. RsmA subfamily.

It is found in the cytoplasm. It carries out the reaction adenosine(1518)/adenosine(1519) in 16S rRNA + 4 S-adenosyl-L-methionine = N(6)-dimethyladenosine(1518)/N(6)-dimethyladenosine(1519) in 16S rRNA + 4 S-adenosyl-L-homocysteine + 4 H(+). Its function is as follows. Specifically dimethylates two adjacent adenosines (A1518 and A1519) in the loop of a conserved hairpin near the 3'-end of 16S rRNA in the 30S particle. May play a critical role in biogenesis of 30S subunits. This chain is Ribosomal RNA small subunit methyltransferase A, found in Pseudomonas syringae pv. syringae (strain B728a).